Consider the following 459-residue polypeptide: FBD-associated F-box protein At5g27750 (459 aa).

The region spanning 4-50 (FDRISELPESLITQILLCLPTKDSVKTSVLSTRWKNLWLNVPGLDLT) is the F-box domain. An FBD domain is found at 374–426 (TEELNLINVPRCIVSTLECVEIKGLFEWEEEEMKIARYFLENAAVLKKLTMSF).

The chain is FBD-associated F-box protein At5g27750 from Arabidopsis thaliana (Mouse-ear cress).